A 441-amino-acid chain; its full sequence is Trigger factor (441 aa).

A PPIase FKBP-type domain is found at 161 to 246 (GDQVTIDFVG…VSEVAEQILP (86 aa)).

It belongs to the FKBP-type PPIase family. Tig subfamily.

It is found in the cytoplasm. The catalysed reaction is [protein]-peptidylproline (omega=180) = [protein]-peptidylproline (omega=0). Functionally, involved in protein export. Acts as a chaperone by maintaining the newly synthesized protein in an open conformation. Functions as a peptidyl-prolyl cis-trans isomerase. This chain is Trigger factor, found in Marinomonas sp. (strain MWYL1).